A 360-amino-acid chain; its full sequence is Chorismate synthase (360 aa).

R46 contributes to the NADP(+) binding site. FMN contacts are provided by residues 122 to 124 (RAS), G282, 297 to 301 (KPTPS), and R324.

Belongs to the chorismate synthase family. The cofactor is FMNH2.

It catalyses the reaction 5-O-(1-carboxyvinyl)-3-phosphoshikimate = chorismate + phosphate. It participates in metabolic intermediate biosynthesis; chorismate biosynthesis; chorismate from D-erythrose 4-phosphate and phosphoenolpyruvate: step 7/7. Catalyzes the anti-1,4-elimination of the C-3 phosphate and the C-6 proR hydrogen from 5-enolpyruvylshikimate-3-phosphate (EPSP) to yield chorismate, which is the branch point compound that serves as the starting substrate for the three terminal pathways of aromatic amino acid biosynthesis. This reaction introduces a second double bond into the aromatic ring system. The polypeptide is Chorismate synthase (Archaeoglobus fulgidus (strain ATCC 49558 / DSM 4304 / JCM 9628 / NBRC 100126 / VC-16)).